The primary structure comprises 182 residues: Segregation and condensation protein B (182 aa).

The protein belongs to the ScpB family. As to quaternary structure, homodimer. Homodimerization may be required to stabilize the binding of ScpA to the Smc head domains. Component of a cohesin-like complex composed of ScpA, ScpB and the Smc homodimer, in which ScpA and ScpB bind to the head domain of Smc. The presence of the three proteins is required for the association of the complex with DNA.

The protein localises to the cytoplasm. In terms of biological role, participates in chromosomal partition during cell division. May act via the formation of a condensin-like complex containing Smc and ScpA that pull DNA away from mid-cell into both cell halves. The sequence is that of Segregation and condensation protein B from Staphylococcus saprophyticus subsp. saprophyticus (strain ATCC 15305 / DSM 20229 / NCIMB 8711 / NCTC 7292 / S-41).